A 494-amino-acid chain; its full sequence is O-acetyltransferase ptmV (494 aa).

Positions 181-203 are disordered; the sequence is ESQQDSREKLRHSGGPPDPRFDH.

This sequence belongs to the fumigaclavine B O-acetyltransferase family. In terms of assembly, monomer.

Its pathway is secondary metabolite biosynthesis. Functionally, O-acetyltransferase; part of the gene cluster that mediates the biosynthesis of the indole diterpenes penitrems. The geranylgeranyl diphosphate (GGPP) synthase ptmG catalyzes the first step in penitrem biosynthesis via conversion of farnesyl pyrophosphate and isopentyl pyrophosphate into geranylgeranyl pyrophosphate (GGPP). Condensation of indole-3-glycerol phosphate with GGPP by the prenyl transferase ptmC then forms 3-geranylgeranylindole (3-GGI). Epoxidation by the FAD-dependent monooxygenase ptmM leads to a epoxidized-GGI that is substrate of the terpene cyclase ptmB for cyclization to yield paspaline. Paspaline is subsequently converted to 13-desoxypaxilline by the cytochrome P450 monooxygenase ptmP, the latter being then converted to paxilline by the cytochrome P450 monooxygenase ptmQ. Paxilline is converted to beta-paxitriol via C-10 ketoreduction by the short-chain dehydrogenase ptmH which can be monoprenylated at the C-20 by the indole diterpene prenyltransferase ptmD. A two-step elimination (acetylation and elimination) process performed by the O-acetyltransferase ptmV and ptmI leads to the production of the prenylated form of penijanthine. The FAD-linked oxidoreductase ptmO then converts the prenylated form of penijanthine into PC-M5 which is in turn transformed into PC-M4 by the aromatic dimethylallyltransferase ptmE. Five sequential oxidative transformations performed by the cytochrome P450 monooxygenases ptmK, ptmU, ptmL, ptmN and ptmJ yield the various penitrem compounds. PtmK, ptmU and ptmM are involved in the formation of the key bicyclic ring of penitrem C via the formation of the intermediates secopenitrem D and penitrem D. PtmL catalyzes the epoxidation of penitrem D and C to yield penitrem B and F, respectively. PtmJ catalyzes the last benzylic hydroxylation to convert penitrem B to prenitrem E and penitrem F to penitrem A. This chain is O-acetyltransferase ptmV, found in Penicillium ochrochloron.